Here is a 576-residue protein sequence, read N- to C-terminus: uncharacterized protein (576 aa).

Residues 241 to 261 (DNTKAPSPTNTAGSRELSTPA) show a composition bias toward polar residues. Positions 241–270 (DNTKAPSPTNTAGSRELSTPAGSPGKASLP) are disordered.

This is an uncharacterized protein from Bacillus subtilis (strain 168).